Here is a 443-residue protein sequence, read N- to C-terminus: Thymidine phosphorylase (443 aa).

It belongs to the thymidine/pyrimidine-nucleoside phosphorylase family. In terms of assembly, homodimer.

The enzyme catalyses thymidine + phosphate = 2-deoxy-alpha-D-ribose 1-phosphate + thymine. It functions in the pathway pyrimidine metabolism; dTMP biosynthesis via salvage pathway; dTMP from thymine: step 1/2. Functionally, the enzymes which catalyze the reversible phosphorolysis of pyrimidine nucleosides are involved in the degradation of these compounds and in their utilization as carbon and energy sources, or in the rescue of pyrimidine bases for nucleotide synthesis. This is Thymidine phosphorylase from Shewanella halifaxensis (strain HAW-EB4).